A 133-amino-acid chain; its full sequence is Maturin (133 aa).

It belongs to the MTURN family.

It localises to the cytoplasm. Functionally, may be involved in early neuronal development. May play a role in promoting megakaryocyte differentiation. The protein is Maturin (mturn) of Danio rerio (Zebrafish).